The chain runs to 37 residues: Cytochrome b6-f complex subunit 5 (37 aa).

The helical transmembrane segment at Leu5–Ala25 threads the bilayer.

It belongs to the PetG family. The 4 large subunits of the cytochrome b6-f complex are cytochrome b6, subunit IV (17 kDa polypeptide, PetD), cytochrome f and the Rieske protein, while the 4 small subunits are PetG, PetL, PetM and PetN. The complex functions as a dimer.

Its subcellular location is the plastid. It is found in the chloroplast thylakoid membrane. In terms of biological role, component of the cytochrome b6-f complex, which mediates electron transfer between photosystem II (PSII) and photosystem I (PSI), cyclic electron flow around PSI, and state transitions. PetG is required for either the stability or assembly of the cytochrome b6-f complex. This chain is Cytochrome b6-f complex subunit 5, found in Rhodomonas salina (Cryptomonas salina).